The following is a 147-amino-acid chain: Insertion element IS402 uncharacterized 16.2 kDa protein (147 aa).

Residues 106 to 147 are disordered; it reads DSSSIRAVGAGQKLGQTPPIARDPVPSTTSSPTPTVRRSPRS. The segment covering 129-147 has biased composition (low complexity); sequence PVPSTTSSPTPTVRRSPRS.

The protein belongs to the transposase 6 family.

The protein is Insertion element IS402 uncharacterized 16.2 kDa protein of Burkholderia cepacia (Pseudomonas cepacia).